The primary structure comprises 1431 residues: DNA polymerase II large subunit (1431 aa).

Positions 1388 to 1431 (LLENFANGYNKGKKEEMPKKQRKKEQEKSKKRKVISLDDFFSRK) are disordered. Residues 1399-1415 (GKKEEMPKKQRKKEQEK) are compositionally biased toward basic and acidic residues.

The protein belongs to the archaeal DNA polymerase II family. Heterodimer of a large subunit and a small subunit. In terms of processing, this protein undergoes a protein self splicing that involves a post-translational excision of the intervening region (intein) followed by peptide ligation.

The catalysed reaction is DNA(n) + a 2'-deoxyribonucleoside 5'-triphosphate = DNA(n+1) + diphosphate. The enzyme catalyses Exonucleolytic cleavage in the 3'- to 5'-direction to yield nucleoside 5'-phosphates.. Its function is as follows. Possesses two activities: a DNA synthesis (polymerase) and an exonucleolytic activity that degrades single-stranded DNA in the 3'- to 5'-direction. Has a template-primer preference which is characteristic of a replicative DNA polymerase. The sequence is that of DNA polymerase II large subunit (polC) from Pyrococcus horikoshii (strain ATCC 700860 / DSM 12428 / JCM 9974 / NBRC 100139 / OT-3).